The following is a 183-amino-acid chain: ATP synthase subunit b, chloroplastic (183 aa).

Residues 25-45 (DILATNLINLTVVVGVLIFFG) traverse the membrane as a helical segment.

Belongs to the ATPase B chain family. In terms of assembly, F-type ATPases have 2 components, F(1) - the catalytic core - and F(0) - the membrane proton channel. F(1) has five subunits: alpha(3), beta(3), gamma(1), delta(1), epsilon(1). F(0) has four main subunits: a(1), b(1), b'(1) and c(10-14). The alpha and beta chains form an alternating ring which encloses part of the gamma chain. F(1) is attached to F(0) by a central stalk formed by the gamma and epsilon chains, while a peripheral stalk is formed by the delta, b and b' chains.

The protein localises to the plastid. Its subcellular location is the chloroplast thylakoid membrane. In terms of biological role, f(1)F(0) ATP synthase produces ATP from ADP in the presence of a proton or sodium gradient. F-type ATPases consist of two structural domains, F(1) containing the extramembraneous catalytic core and F(0) containing the membrane proton channel, linked together by a central stalk and a peripheral stalk. During catalysis, ATP synthesis in the catalytic domain of F(1) is coupled via a rotary mechanism of the central stalk subunits to proton translocation. Its function is as follows. Component of the F(0) channel, it forms part of the peripheral stalk, linking F(1) to F(0). This is ATP synthase subunit b, chloroplastic from Saccharum hybrid (Sugarcane).